The sequence spans 232 residues: Phosphatidylserine decarboxylase proenzyme (232 aa).

Ser190 serves as the catalytic Schiff-base intermediate with substrate; via pyruvic acid. Ser190 bears the Pyruvic acid (Ser); by autocatalysis mark.

This sequence belongs to the phosphatidylserine decarboxylase family. PSD-A subfamily. As to quaternary structure, heterodimer of a large membrane-associated beta subunit and a small pyruvoyl-containing alpha subunit. Requires pyruvate as cofactor. In terms of processing, is synthesized initially as an inactive proenzyme. Formation of the active enzyme involves a self-maturation process in which the active site pyruvoyl group is generated from an internal serine residue via an autocatalytic post-translational modification. Two non-identical subunits are generated from the proenzyme in this reaction, and the pyruvate is formed at the N-terminus of the alpha chain, which is derived from the carboxyl end of the proenzyme. The post-translation cleavage follows an unusual pathway, termed non-hydrolytic serinolysis, in which the side chain hydroxyl group of the serine supplies its oxygen atom to form the C-terminus of the beta chain, while the remainder of the serine residue undergoes an oxidative deamination to produce ammonia and the pyruvoyl prosthetic group on the alpha chain.

Its subcellular location is the cell membrane. The catalysed reaction is a 1,2-diacyl-sn-glycero-3-phospho-L-serine + H(+) = a 1,2-diacyl-sn-glycero-3-phosphoethanolamine + CO2. Its pathway is phospholipid metabolism; phosphatidylethanolamine biosynthesis; phosphatidylethanolamine from CDP-diacylglycerol: step 2/2. Its function is as follows. Catalyzes the formation of phosphatidylethanolamine (PtdEtn) from phosphatidylserine (PtdSer). In Rhizobium etli (strain CIAT 652), this protein is Phosphatidylserine decarboxylase proenzyme.